Consider the following 412-residue polypeptide: Acetylornithine aminotransferase (412 aa).

Pyridoxal 5'-phosphate contacts are provided by residues 109 to 110 (GA) and phenylalanine 142. Arginine 145 serves as a coordination point for N(2)-acetyl-L-ornithine. Residue 233 to 236 (DEVQ) coordinates pyridoxal 5'-phosphate. At lysine 262 the chain carries N6-(pyridoxal phosphate)lysine. Position 289 (serine 289) interacts with N(2)-acetyl-L-ornithine. Threonine 290 contributes to the pyridoxal 5'-phosphate binding site.

The protein belongs to the class-III pyridoxal-phosphate-dependent aminotransferase family. ArgD subfamily. In terms of assembly, homodimer. Pyridoxal 5'-phosphate is required as a cofactor.

It is found in the cytoplasm. It catalyses the reaction N(2)-acetyl-L-ornithine + 2-oxoglutarate = N-acetyl-L-glutamate 5-semialdehyde + L-glutamate. It participates in amino-acid biosynthesis; L-arginine biosynthesis; N(2)-acetyl-L-ornithine from L-glutamate: step 4/4. This is Acetylornithine aminotransferase from Thermosynechococcus vestitus (strain NIES-2133 / IAM M-273 / BP-1).